Here is a 673-residue protein sequence, read N- to C-terminus: Methionine--tRNA ligase (673 aa).

The 'HIGH' region motif lies at 14-24 (YYPSGKLHIGN). The 'KMSKS' region motif lies at 310-314 (KMSKS). An ATP-binding site is contributed by Lys-313. Residues 571-673 (VFDKVELKVA…SEAPNGSSIS (103 aa)) form the tRNA-binding domain.

It belongs to the class-I aminoacyl-tRNA synthetase family. MetG type 2B subfamily. In terms of assembly, homodimer.

Its subcellular location is the cytoplasm. It carries out the reaction tRNA(Met) + L-methionine + ATP = L-methionyl-tRNA(Met) + AMP + diphosphate. Functionally, is required not only for elongation of protein synthesis but also for the initiation of all mRNA translation through initiator tRNA(fMet) aminoacylation. The chain is Methionine--tRNA ligase (metG) from Oceanobacillus iheyensis (strain DSM 14371 / CIP 107618 / JCM 11309 / KCTC 3954 / HTE831).